Reading from the N-terminus, the 245-residue chain is 2,3-bisphosphoglycerate-dependent phosphoglycerate mutase (245 aa).

Residues 8-15 (RHGQSLWN), 21-22 (TG), R60, 87-90 (ERHY), K98, 114-115 (RR), and 183-184 (GN) contribute to the substrate site. H9 functions as the Tele-phosphohistidine intermediate in the catalytic mechanism. E87 (proton donor/acceptor) is an active-site residue.

This sequence belongs to the phosphoglycerate mutase family. BPG-dependent PGAM subfamily.

The catalysed reaction is (2R)-2-phosphoglycerate = (2R)-3-phosphoglycerate. Its pathway is carbohydrate degradation; glycolysis; pyruvate from D-glyceraldehyde 3-phosphate: step 3/5. Its function is as follows. Catalyzes the interconversion of 2-phosphoglycerate and 3-phosphoglycerate. The sequence is that of 2,3-bisphosphoglycerate-dependent phosphoglycerate mutase from Bacillus cereus (strain G9842).